A 376-amino-acid chain; its full sequence is Thymidine kinase (376 aa).

The interval 1–39 (MASYPCHQHASAFDQAARSRGHSNRRTALRPRRQQEATE) is disordered. Over residues 19-32 (SRGHSNRRTALRPR) the composition is skewed to basic residues. An ATP-binding site is contributed by 56–63 (GPHGMGKT). E83 functions as the Proton acceptor in the catalytic mechanism. Substrate-binding residues include Y101 and Q125. R216 lines the ATP pocket. R222 is a substrate binding site. The segment at 260–280 (GQLSGTAVPPQGAEPQSNAGP) is disordered.

Belongs to the herpesviridae thymidine kinase family. Homodimer.

It carries out the reaction thymidine + ATP = dTMP + ADP + H(+). Catalyzes the transfer of the gamma-phospho group of ATP to thymidine to generate dTMP in the salvage pathway of pyrimidine synthesis. The dTMP serves as a substrate for DNA polymerase during viral DNA replication. Allows the virus to be reactivated and to grow in non-proliferative cells lacking a high concentration of phosphorylated nucleic acid precursors. In Homo sapiens (Human), this protein is Thymidine kinase.